A 197-amino-acid polypeptide reads, in one-letter code: Beta-crystallin A2 (197 aa).

The tract at residues 1 to 11 (MSSAPAPGPAP) is N-terminal arm. Beta/gamma crystallin 'Greek key' domains lie at 12–52 (ASLT…KVEN) and 53–99 (GVWV…RPVL). Positions 100 to 105 (CANHND) are connecting peptide. 2 consecutive Beta/gamma crystallin 'Greek key' domains span residues 106 to 147 (SRVT…KVSS) and 148 to 196 (GAWV…RRVQ).

This sequence belongs to the beta/gamma-crystallin family. Homo/heterodimer, or complexes of higher-order. The structure of beta-crystallin oligomers seems to be stabilized through interactions between the N-terminal arms.

Its function is as follows. Crystallins are the dominant structural components of the vertebrate eye lens. This chain is Beta-crystallin A2 (CRYBA2), found in Homo sapiens (Human).